The sequence spans 243 residues: tRNA (cytidine/uridine-2'-O-)-methyltransferase TrmJ (243 aa).

S-adenosyl-L-methionine contacts are provided by residues Thr-79–Ala-81, Gly-114, Ile-134, and Ser-141–Leu-143.

It belongs to the class IV-like SAM-binding methyltransferase superfamily. RNA methyltransferase TrmH family. In terms of assembly, homodimer.

The protein localises to the cytoplasm. It carries out the reaction cytidine(32) in tRNA + S-adenosyl-L-methionine = 2'-O-methylcytidine(32) in tRNA + S-adenosyl-L-homocysteine + H(+). The enzyme catalyses uridine(32) in tRNA + S-adenosyl-L-methionine = 2'-O-methyluridine(32) in tRNA + S-adenosyl-L-homocysteine + H(+). Catalyzes the formation of 2'O-methylated cytidine (Cm32) or 2'O-methylated uridine (Um32) at position 32 in tRNA. The sequence is that of tRNA (cytidine/uridine-2'-O-)-methyltransferase TrmJ (trmJ) from Salmonella paratyphi A (strain ATCC 9150 / SARB42).